Consider the following 805-residue polypeptide: Zinc finger X-chromosomal protein (805 aa).

Serine 274 carries the phosphoserine modification. C2H2-type zinc fingers lie at residues 425–447, 456–478, 488–510, 519–542, 548–570, 576–599, 605–627, 633–656, 662–684, 690–713, 719–741, 747–770, and 776–798; these read YPCM…MKNH, YRCT…LESH, IECD…KMVH, HKCK…LAVH, HICV…MRIH, YQCQ…KTKH, FKCD…ALIH, HQCL…ISVH, HKCD…VAAH, HQCR…LSVH, FRCK…MKTH, YQCE…ISIH, and HRCE…IMRH.

The protein belongs to the krueppel C2H2-type zinc-finger protein family. ZFX/ZFY subfamily.

It is found in the nucleus. In terms of biological role, probable transcriptional activator. The protein is Zinc finger X-chromosomal protein (ZFX) of Homo sapiens (Human).